The sequence spans 246 residues: ATP synthase subunit a (246 aa).

Positions 1 to 3 (MFY) are cleaved as a propeptide — removed in mature form. Transmembrane regions (helical) follow at residues 21 to 41 (LTFS…IIIF), 56 to 76 (WGVS…GQIG), 82 to 102 (YFPL…ISMI), 113 to 133 (VAVV…GLYL), 138 to 158 (FFAL…LVLI), 184 to 204 (LMLI…LGFV), and 206 to 226 (GIIP…IAII).

It belongs to the ATPase A chain family. In terms of assembly, F-type ATPases have 2 components, CF(1) - the catalytic core - and CF(0) - the membrane proton channel. CF(1) has five subunits: alpha(3), beta(3), gamma(1), delta(1), epsilon(1). CF(0) has three main subunits: a, b and c.

It localises to the mitochondrion inner membrane. In terms of biological role, mitochondrial membrane ATP synthase (F(1)F(0) ATP synthase or Complex V) produces ATP from ADP in the presence of a proton gradient across the membrane which is generated by electron transport complexes of the respiratory chain. F-type ATPases consist of two structural domains, F(1) - containing the extramembraneous catalytic core and F(0) - containing the membrane proton channel, linked together by a central stalk and a peripheral stalk. During catalysis, ATP synthesis in the catalytic domain of F(1) is coupled via a rotary mechanism of the central stalk subunits to proton translocation. Key component of the proton channel; it may play a direct role in the translocation of protons across the membrane. The protein is ATP synthase subunit a (ATP6) of Candida parapsilosis (Yeast).